Here is a 507-residue protein sequence, read N- to C-terminus: Flagellar hook-associated protein 1 (507 aa).

It belongs to the flagella basal body rod proteins family.

It localises to the secreted. Its subcellular location is the bacterial flagellum. In Bacillus subtilis (strain 168), this protein is Flagellar hook-associated protein 1 (flgK).